Reading from the N-terminus, the 401-residue chain is Argininosuccinate synthase (401 aa).

ATP is bound by residues Ala10–Ser18 and Ala38. Residue Tyr89 participates in L-citrulline binding. Gly119 serves as a coordination point for ATP. Residues Thr121, Asn125, and Asp126 each contribute to the L-aspartate site. Asn125 is a binding site for L-citrulline. Positions 129, 177, 186, 262, and 274 each coordinate L-citrulline.

This sequence belongs to the argininosuccinate synthase family. Type 1 subfamily. In terms of assembly, homotetramer.

It is found in the cytoplasm. The enzyme catalyses L-citrulline + L-aspartate + ATP = 2-(N(omega)-L-arginino)succinate + AMP + diphosphate + H(+). It functions in the pathway amino-acid biosynthesis; L-arginine biosynthesis; L-arginine from L-ornithine and carbamoyl phosphate: step 2/3. The sequence is that of Argininosuccinate synthase from Microcystis aeruginosa (strain NIES-843 / IAM M-2473).